The sequence spans 264 residues: S-adenosylmethionine decarboxylase proenzyme (264 aa).

Serine 112 serves as the catalytic Schiff-base intermediate with substrate; via pyruvic acid. Serine 112 is modified (pyruvic acid (Ser); by autocatalysis). The active-site Proton acceptor; for processing activity is histidine 117. The active-site Proton donor; for catalytic activity is cysteine 140.

The protein belongs to the prokaryotic AdoMetDC family. Type 2 subfamily. In terms of assembly, heterooctamer of four alpha and four beta chains arranged as a tetramer of alpha/beta heterodimers. Pyruvate is required as a cofactor. Post-translationally, is synthesized initially as an inactive proenzyme. Formation of the active enzyme involves a self-maturation process in which the active site pyruvoyl group is generated from an internal serine residue via an autocatalytic post-translational modification. Two non-identical subunits are generated from the proenzyme in this reaction, and the pyruvate is formed at the N-terminus of the alpha chain, which is derived from the carboxyl end of the proenzyme. The post-translation cleavage follows an unusual pathway, termed non-hydrolytic serinolysis, in which the side chain hydroxyl group of the serine supplies its oxygen atom to form the C-terminus of the beta chain, while the remainder of the serine residue undergoes an oxidative deamination to produce ammonia and the pyruvoyl group blocking the N-terminus of the alpha chain.

The enzyme catalyses S-adenosyl-L-methionine + H(+) = S-adenosyl 3-(methylsulfanyl)propylamine + CO2. It participates in amine and polyamine biosynthesis; S-adenosylmethioninamine biosynthesis; S-adenosylmethioninamine from S-adenosyl-L-methionine: step 1/1. Its function is as follows. Catalyzes the decarboxylation of S-adenosylmethionine to S-adenosylmethioninamine (dcAdoMet), the propylamine donor required for the synthesis of the polyamines spermine and spermidine from the diamine putrescine. The protein is S-adenosylmethionine decarboxylase proenzyme of Salmonella arizonae (strain ATCC BAA-731 / CDC346-86 / RSK2980).